Consider the following 315-residue polypeptide: 4-hydroxy-3-methylbut-2-enyl diphosphate reductase (315 aa).

Cys-12 is a binding site for [4Fe-4S] cluster. His-40 and His-74 together coordinate (2E)-4-hydroxy-3-methylbut-2-enyl diphosphate. His-40 and His-74 together coordinate dimethylallyl diphosphate. Residues His-40 and His-74 each contribute to the isopentenyl diphosphate site. A [4Fe-4S] cluster-binding site is contributed by Cys-96. (2E)-4-hydroxy-3-methylbut-2-enyl diphosphate is bound at residue His-124. Position 124 (His-124) interacts with dimethylallyl diphosphate. Position 124 (His-124) interacts with isopentenyl diphosphate. Residue Glu-126 is the Proton donor of the active site. A (2E)-4-hydroxy-3-methylbut-2-enyl diphosphate-binding site is contributed by Thr-167. Cys-213 contributes to the [4Fe-4S] cluster binding site. The (2E)-4-hydroxy-3-methylbut-2-enyl diphosphate site is built by Ser-241, Ser-242, Asn-243, and Ser-290. Dimethylallyl diphosphate is bound by residues Ser-241, Ser-242, Asn-243, and Ser-290. Isopentenyl diphosphate contacts are provided by Ser-241, Ser-242, Asn-243, and Ser-290.

The protein belongs to the IspH family. [4Fe-4S] cluster is required as a cofactor.

It carries out the reaction isopentenyl diphosphate + 2 oxidized [2Fe-2S]-[ferredoxin] + H2O = (2E)-4-hydroxy-3-methylbut-2-enyl diphosphate + 2 reduced [2Fe-2S]-[ferredoxin] + 2 H(+). The catalysed reaction is dimethylallyl diphosphate + 2 oxidized [2Fe-2S]-[ferredoxin] + H2O = (2E)-4-hydroxy-3-methylbut-2-enyl diphosphate + 2 reduced [2Fe-2S]-[ferredoxin] + 2 H(+). The protein operates within isoprenoid biosynthesis; dimethylallyl diphosphate biosynthesis; dimethylallyl diphosphate from (2E)-4-hydroxy-3-methylbutenyl diphosphate: step 1/1. It participates in isoprenoid biosynthesis; isopentenyl diphosphate biosynthesis via DXP pathway; isopentenyl diphosphate from 1-deoxy-D-xylulose 5-phosphate: step 6/6. In terms of biological role, catalyzes the conversion of 1-hydroxy-2-methyl-2-(E)-butenyl 4-diphosphate (HMBPP) into a mixture of isopentenyl diphosphate (IPP) and dimethylallyl diphosphate (DMAPP). Acts in the terminal step of the DOXP/MEP pathway for isoprenoid precursor biosynthesis. This Chloroherpeton thalassium (strain ATCC 35110 / GB-78) protein is 4-hydroxy-3-methylbut-2-enyl diphosphate reductase.